We begin with the raw amino-acid sequence, 169 residues long: NAD(P)H-quinone oxidoreductase subunit J, chloroplastic (169 aa).

This sequence belongs to the complex I 30 kDa subunit family. In terms of assembly, NDH is composed of at least 16 different subunits, 5 of which are encoded in the nucleus.

It is found in the plastid. The protein localises to the chloroplast thylakoid membrane. It catalyses the reaction a plastoquinone + NADH + (n+1) H(+)(in) = a plastoquinol + NAD(+) + n H(+)(out). The enzyme catalyses a plastoquinone + NADPH + (n+1) H(+)(in) = a plastoquinol + NADP(+) + n H(+)(out). In terms of biological role, NDH shuttles electrons from NAD(P)H:plastoquinone, via FMN and iron-sulfur (Fe-S) centers, to quinones in the photosynthetic chain and possibly in a chloroplast respiratory chain. The immediate electron acceptor for the enzyme in this species is believed to be plastoquinone. Couples the redox reaction to proton translocation, and thus conserves the redox energy in a proton gradient. This Physcomitrium patens (Spreading-leaved earth moss) protein is NAD(P)H-quinone oxidoreductase subunit J, chloroplastic.